A 249-amino-acid chain; its full sequence is 2,3-bisphosphoglycerate-dependent phosphoglycerate mutase (249 aa).

Substrate contacts are provided by residues 8–15 (RHGESAWN), 21–22 (TG), arginine 60, 87–90 (ERHY), lysine 98, 114–115 (RR), and 183–184 (GN). The Tele-phosphohistidine intermediate role is filled by histidine 9. Residue glutamate 87 is the Proton donor/acceptor of the active site.

This sequence belongs to the phosphoglycerate mutase family. BPG-dependent PGAM subfamily.

The enzyme catalyses (2R)-2-phosphoglycerate = (2R)-3-phosphoglycerate. Its pathway is carbohydrate degradation; glycolysis; pyruvate from D-glyceraldehyde 3-phosphate: step 3/5. Its function is as follows. Catalyzes the interconversion of 2-phosphoglycerate and 3-phosphoglycerate. This is 2,3-bisphosphoglycerate-dependent phosphoglycerate mutase from Methanosphaerula palustris (strain ATCC BAA-1556 / DSM 19958 / E1-9c).